Consider the following 228-residue polypeptide: Thermonuclease (228 aa).

The first 23 residues, Met1–Ala23, serve as a signal peptide directing secretion. A propeptide spanning residues Ile24–Ala60 is cleaved from the precursor. Positions Ala58 to Ser70 are enriched in polar residues. Residues Ala58 to Thr83 form a disordered region. Asp100 is a Ca(2+) binding site. Arg114 is an active-site residue. Ca(2+) contacts are provided by Asp119 and Thr120. Catalysis depends on residues Glu122 and Arg166.

Belongs to the thermonuclease family. The cofactor is Ca(2+).

The protein resides in the secreted. The catalysed reaction is Endonucleolytic cleavage to nucleoside 3'-phosphates and 3'-phosphooligonucleotide end-products.. In terms of biological role, enzyme that catalyzes the hydrolysis of both DNA and RNA at the 5' position of the phosphodiester bond. The polypeptide is Thermonuclease (nuc) (Staphylococcus aureus (strain COL)).